Reading from the N-terminus, the 25-residue chain is Xenoposin precursor fragment BM2 (25 aa).

Expressed by the skin glands.

It is found in the secreted. Functionally, antimicrobial peptide. The polypeptide is Xenoposin precursor fragment BM2 (Xenopus boumbaensis (Mawa clawed frog)).